We begin with the raw amino-acid sequence, 78 residues long: Esculentin-2Vb (78 aa).

An N-terminal signal peptide occupies residues 1–22 (MFTMKKSLLLLFFLGTISLSLC). The propeptide occupies 23–39 (EEERGADEEEGDGEKLM). Residues cysteine 72 and cysteine 78 are joined by a disulfide bond.

In terms of tissue distribution, expressed by the skin glands.

The protein localises to the secreted. Functionally, antimicrobial peptide. This is Esculentin-2Vb from Odorrana versabilis (Chinese bamboo leaf odorous frog).